A 177-amino-acid polypeptide reads, in one-letter code: ATP synthase subunit delta (177 aa).

Belongs to the ATPase delta chain family. F-type ATPases have 2 components, F(1) - the catalytic core - and F(0) - the membrane proton channel. F(1) has five subunits: alpha(3), beta(3), gamma(1), delta(1), epsilon(1). F(0) has three main subunits: a(1), b(2) and c(10-14). The alpha and beta chains form an alternating ring which encloses part of the gamma chain. F(1) is attached to F(0) by a central stalk formed by the gamma and epsilon chains, while a peripheral stalk is formed by the delta and b chains.

The protein localises to the cell inner membrane. Its function is as follows. F(1)F(0) ATP synthase produces ATP from ADP in the presence of a proton or sodium gradient. F-type ATPases consist of two structural domains, F(1) containing the extramembraneous catalytic core and F(0) containing the membrane proton channel, linked together by a central stalk and a peripheral stalk. During catalysis, ATP synthesis in the catalytic domain of F(1) is coupled via a rotary mechanism of the central stalk subunits to proton translocation. This protein is part of the stalk that links CF(0) to CF(1). It either transmits conformational changes from CF(0) to CF(1) or is implicated in proton conduction. This is ATP synthase subunit delta from Leptothrix cholodnii (strain ATCC 51168 / LMG 8142 / SP-6) (Leptothrix discophora (strain SP-6)).